The sequence spans 259 residues: MILVIDVGNTNCTVGVYEKQKLLKHWRMTTDRHRTSDELGMTVLNFFSYANLTPSDIQGIIISSVVPPIMHAMETMCVRYFNIRPLIVGPGIKTGLNVKVDNPREIGSDRIVNAVAASEEYGTPIIVVDFGTATTFCYIDELGAYQGGAIAPGIMISTEALYNRAAKLPRVDIAESNQIIGKSTVSSMQAGIFYGFVGQCEGIIAEMKKQSNSNPVVVATGGLARMITEKSSAVDILDPFLTLKGLELLYRRNKPTTEK.

6-13 (DVGNTNCT) is a binding site for ATP. 107 to 110 (GSDR) contributes to the substrate binding site. The active-site Proton acceptor is Asp-109. Position 129 (Asp-129) interacts with K(+). Thr-132 is an ATP binding site. Thr-184 serves as a coordination point for substrate.

The protein belongs to the type III pantothenate kinase family. In terms of assembly, homodimer. It depends on NH4(+) as a cofactor. K(+) serves as cofactor.

The protein resides in the cytoplasm. It catalyses the reaction (R)-pantothenate + ATP = (R)-4'-phosphopantothenate + ADP + H(+). Its pathway is cofactor biosynthesis; coenzyme A biosynthesis; CoA from (R)-pantothenate: step 1/5. Its function is as follows. Catalyzes the phosphorylation of pantothenate (Pan), the first step in CoA biosynthesis. In Listeria welshimeri serovar 6b (strain ATCC 35897 / DSM 20650 / CCUG 15529 / CIP 8149 / NCTC 11857 / SLCC 5334 / V8), this protein is Type III pantothenate kinase.